The sequence spans 176 residues: Natural cytotoxicity triggering receptor 3 (176 aa).

A signal peptide spans 1-18 (MAWMLLLILIMVYPGSCA). The 108-residue stretch at 19 to 126 (LWVSQPPEIR…VGTGNGTRLV (108 aa)) folds into the Ig-like domain. Residues 19 to 135 (LWVSQPPEIR…VVEKEYPQLG (117 aa)) are Extracellular-facing. The cysteines at positions 39 and 108 are disulfide-linked. 2 N-linked (GlcNAc...) asparagine glycosylation sites follow: N42 and N121. Residues 136-156 (AGTVLLLRAGFYAVSFLSVAV) traverse the membrane as a helical segment. Residues 157–176 (GSTLYYQGKCHCHMGTHCHS) lie on the Cytoplasmic side of the membrane.

It belongs to the natural cytotoxicity receptor (NCR) family. Homodimer in the unliganted form. Interacts with CD3Z. Interacts with and is activated by binding to NCR3LG1. Interacts with and is activated by binding to BAG6. Interacts with and is inhibited by binding to LGALS3.

Its subcellular location is the cell membrane. Functionally, cell membrane receptor of natural killer/NK cells that is activated by binding of extracellular ligands including BAG6 and NCR3LG1. Stimulates NK cells cytotoxicity toward neighboring cells producing these ligands. It controls, for instance, NK cells cytotoxicity against tumor cells. Engagement of NCR3 by BAG6 also promotes myeloid dendritic cells (DC) maturation, both through killing DCs that did not acquire a mature phenotype, and inducing the release by NK cells of TNFA and IFNG that promote DC maturation. The chain is Natural cytotoxicity triggering receptor 3 (NCR3) from Macaca fascicularis (Crab-eating macaque).